The chain runs to 167 residues: 6,7-dimethyl-8-ribityllumazine synthase (167 aa).

5-amino-6-(D-ribitylamino)uracil contacts are provided by residues F23, 57-59 (TYE), and 81-83 (AVI). (2S)-2-hydroxy-3-oxobutyl phosphate is bound at residue 86 to 87 (GT). H89 (proton donor) is an active-site residue. Residue F119 participates in 5-amino-6-(D-ribitylamino)uracil binding. R133 is a (2S)-2-hydroxy-3-oxobutyl phosphate binding site.

It belongs to the DMRL synthase family.

It carries out the reaction (2S)-2-hydroxy-3-oxobutyl phosphate + 5-amino-6-(D-ribitylamino)uracil = 6,7-dimethyl-8-(1-D-ribityl)lumazine + phosphate + 2 H2O + H(+). Its pathway is cofactor biosynthesis; riboflavin biosynthesis; riboflavin from 2-hydroxy-3-oxobutyl phosphate and 5-amino-6-(D-ribitylamino)uracil: step 1/2. Its function is as follows. Catalyzes the formation of 6,7-dimethyl-8-ribityllumazine by condensation of 5-amino-6-(D-ribitylamino)uracil with 3,4-dihydroxy-2-butanone 4-phosphate. This is the penultimate step in the biosynthesis of riboflavin. This Myxococcus xanthus (strain DK1622) protein is 6,7-dimethyl-8-ribityllumazine synthase.